The sequence spans 357 residues: Set1 complex component swd2 (357 aa).

WD repeat units lie at residues 24–65 (NFVG…KSLA), 110–149 (GHKQ…CQGL), 199–241 (PPHV…RVPS), and 247–289 (TQDG…QTVN).

The protein belongs to the WD repeat SWD2 family. As to quaternary structure, component of the Set1 complex composed of ash2, sdc1, set1, shg1, spp1, swd1, swd2 and swd3.

Its subcellular location is the nucleus. The Set1 complex specifically methylates 'Lys-4' of histone H3. In Schizosaccharomyces pombe (strain 972 / ATCC 24843) (Fission yeast), this protein is Set1 complex component swd2.